The primary structure comprises 148 residues: F-box protein At3g55900 (148 aa).

Positions 9–59 (CRNLSELPQELLYKILGLLPTRNVVSTSLISHQRRSQFHWMERLKFRYPRL) constitute an F-box domain.

This is F-box protein At3g55900 from Arabidopsis thaliana (Mouse-ear cress).